We begin with the raw amino-acid sequence, 110 residues long: Ribonuclease P protein component (110 aa).

It belongs to the RnpA family. As to quaternary structure, consists of a catalytic RNA component (M1 or rnpB) and a protein subunit.

The enzyme catalyses Endonucleolytic cleavage of RNA, removing 5'-extranucleotides from tRNA precursor.. RNaseP catalyzes the removal of the 5'-leader sequence from pre-tRNA to produce the mature 5'-terminus. It can also cleave other RNA substrates such as 4.5S RNA. The protein component plays an auxiliary but essential role in vivo by binding to the 5'-leader sequence and broadening the substrate specificity of the ribozyme. This Mesoplasma florum (strain ATCC 33453 / NBRC 100688 / NCTC 11704 / L1) (Acholeplasma florum) protein is Ribonuclease P protein component.